The chain runs to 74 residues: Protein kish-B (74 aa).

The N-terminal stretch at 1–22 is a signal peptide; that stretch reads MTNVYSLDGLLVFALLFVCTCA. Residues 23–52 lie on the Extracellular side of the membrane; the sequence is YFRKVPRLRSWLLSEKKGVWGVFYKAAVIG. Residues 53–73 form a helical membrane-spanning segment; the sequence is SRLHLAVSISCIAMAFYVLFI. Residue lysine 74 is a topological domain, cytoplasmic.

This sequence belongs to the KISH family.

Its subcellular location is the golgi apparatus membrane. In terms of biological role, involved in the early part of the secretory pathway. The protein is Protein kish-B (tmem167b) of Xenopus laevis (African clawed frog).